A 262-amino-acid polypeptide reads, in one-letter code: MQTIIRVEKLAKTFNQHQALHAVDLNIHHGEMVALLGPSGSGKSTLLRHLSGLITGDKSVGSHIELLGRTVQREGRLARDIRKSRAHTGYIFQQFNLVNRLSVLENVLIGALGSTPFWRTCFSYFTREQKQRALQALTRVGMVHFAHQRVSTLSGGQQQRVAIARALMQQAKVILADEPIASLDPESARIVMDTLRDINQNDGITVVVTLHQVDYALRYCERIVALRQGHVFYDGCSQQFDNERFDHLYRSINRVEENAKAA.

Residues 5-253 (IRVEKLAKTF…RFDHLYRSIN (249 aa)) enclose the ABC transporter domain. 37 to 44 (GPSGSGKS) contacts ATP.

This sequence belongs to the ABC transporter superfamily. Phosphonates importer (TC 3.A.1.9.1) family. As to quaternary structure, the complex is composed of two ATP-binding proteins (PhnC), two transmembrane proteins (PhnE) and a solute-binding protein (PhnD).

The protein resides in the cell inner membrane. It carries out the reaction phosphonate(out) + ATP + H2O = phosphonate(in) + ADP + phosphate + H(+). Functionally, part of the ABC transporter complex PhnCDE involved in phosphonates import. Responsible for energy coupling to the transport system. In Escherichia coli (strain UTI89 / UPEC), this protein is Phosphonates import ATP-binding protein PhnC.